Here is a 1946-residue protein sequence, read N- to C-terminus: Sickle tail protein (1946 aa).

2 disordered regions span residues 1-83 and 113-176; these read MEES…GMQP and ERLR…VRSA. Residues 18 to 36 are compositionally biased toward polar residues; sequence DSRQMPQQGRSNLHVTSQE. A compositionally biased stretch (basic and acidic residues) spans 38–47; it reads AACRRPRERL. Residue serine 169 is modified to Phosphoserine. Tyrosine 244 carries the phosphotyrosine modification. Disordered regions lie at residues 305-324 and 339-374; these read HPPH…HSLP and AIPG…RDVK. Positions 308-324 are enriched in pro residues; sequence HVIPNSPPSTPVPHSLP. The span at 352–367 shows a compositional bias: low complexity; sequence SSLPVSRSISPSPSAI. An O-linked (GlcNAc) serine glycan is attached at serine 357. Serine 361 and serine 365 each carry phosphoserine. Tyrosine 393 is subject to Phosphotyrosine. The tract at residues 455–512 is disordered; that stretch reads SRKYPDSHLPTLGSKTPPASPHRVGDLRMIDLHPHLNTHGPPHTLQPDRASPSRQSFK. Threonine 470 is modified (phosphothreonine). A Phosphoserine modification is found at serine 474. Basic and acidic residues predominate over residues 477–488; sequence RVGDLRMIDLHP. Coiled-coil stretches lie at residues 557 to 581 and 644 to 685; these read RETR…QSAL and TSLL…ELEI. Serine 809 carries the phosphoserine modification. Disordered regions lie at residues 853–875 and 891–947; these read EETA…DVKS and SPVV…PVNG. 2 stretches are compositionally biased toward polar residues: residues 891 to 909 and 927 to 947; these read SPVV…NPAQ and QEVT…PVNG. Residues 962-990 are a coiled coil; that stretch reads SAKNRAVSIEKAEKKWEEKRQNLEHYNGK. The tract at residues 1008-1221 is disordered; that stretch reads PNLEMPPASS…LRPSGPPKWE (214 aa). Serine 1032, serine 1035, serine 1038, and serine 1049 each carry phosphoserine. Residues 1049–1058 show a composition bias toward pro residues; it reads SPPPPPPPPR. Residues 1151–1162 are compositionally biased toward polar residues; that stretch reads NPNSHAEQSRAN. The span at 1176-1194 shows a compositional bias: basic and acidic residues; sequence PKEKKNLEFYHEDVRKSDV. Residue serine 1466 is modified to Phosphoserine. Positions 1469–1495 form a coiled coil; sequence FEECDEELERMLTEEKIEEEEEDENED. 3 disordered regions span residues 1482–1567, 1622–1664, and 1691–1946; these read EEKI…VDDQ, AKRF…RKST, and VDTS…KETS. The span at 1484-1495 shows a compositional bias: acidic residues; it reads KIEEEEEDENED. A compositionally biased stretch (polar residues) spans 1498-1508; the sequence is VRTSSQMSCEQ. 2 stretches are compositionally biased toward basic and acidic residues: residues 1509–1518 and 1622–1644; these read VDSRSDRMGQ and AKRF…RRQE. Residues 1659 to 1688 are a coiled coil; the sequence is EIRKSTYRTLDSLEQTIKQLENTISEMSPR. Polar residues predominate over residues 1739-1759; that stretch reads KGSSTTPQTSRMPVPMTSKNR. Serine 1741 bears the Phosphoserine mark. Residues 1765–1777 are compositionally biased toward basic and acidic residues; it reads KASKQSKLQDPRQ. Positions 1806 to 1825 are enriched in low complexity; sequence ALSPSSGKSSSLPSASGDSS. Serine 1843 bears the Phosphoserine mark. Positions 1851 to 1866 are enriched in polar residues; that stretch reads HSASLIPSVSNGSLKF. Residues 1890–1899 are compositionally biased toward low complexity; sequence AAPTTSSSSS. A phosphoserine mark is found at serine 1899, serine 1902, and serine 1905. Residues 1920-1946 show a composition bias toward polar residues; that stretch reads HTPSLASYKAQNGSSSKATPSTAKETS.

In terms of assembly, interacts with CPNE4 (via VWFA domain). In terms of tissue distribution, expressed predominantly in the notochord and mesonephros during embryogenesis as well as in other areas such as the epithalamus sulcus, lens vesicle, inner retinal layer, heart, hepatic primordial surface, infundibulum, surface ectoderm, hind gut and limb bud mesenchyme. In adults, expressed in a range of tissues including the nucleus pulposus, corpus callosum, kidney, cardiac muscle, Sertoli cells and hair follicles.

The protein localises to the cytoplasm. It localises to the cytoskeleton. It is found in the microtubule organizing center. Its subcellular location is the centrosome. In terms of biological role, required for normal development of intervertebral disks. The protein is Sickle tail protein of Mus musculus (Mouse).